Reading from the N-terminus, the 701-residue chain is Polyribonucleotide nucleotidyltransferase (701 aa).

Residues aspartate 487 and aspartate 493 each contribute to the Mg(2+) site. One can recognise a KH domain in the interval 554–613 (PTMIAMKIDTDKIRDVIGKGGATIRAICEETKASIDIEDDGSIKIFGESKEAAEAARQRV). The 69-residue stretch at 623–691 (GKIYVGKVER…NRGRIKLSIK (69 aa)) folds into the S1 motif domain.

This sequence belongs to the polyribonucleotide nucleotidyltransferase family. Component of the RNA degradosome, which is a multiprotein complex involved in RNA processing and mRNA degradation. Mg(2+) serves as cofactor.

The protein resides in the cytoplasm. It carries out the reaction RNA(n+1) + phosphate = RNA(n) + a ribonucleoside 5'-diphosphate. Involved in mRNA degradation. Catalyzes the phosphorolysis of single-stranded polyribonucleotides processively in the 3'- to 5'-direction. The polypeptide is Polyribonucleotide nucleotidyltransferase (Pseudomonas savastanoi pv. phaseolicola (strain 1448A / Race 6) (Pseudomonas syringae pv. phaseolicola (strain 1448A / Race 6))).